The following is a 168-amino-acid chain: Lipoprotein signal peptidase (168 aa).

Helical transmembrane passes span 57 to 77 (PKEVMILLVGTISLLIALYVF) and 86 to 106 (FILPFALVFGGGVGNMIDRIT). Residues aspartate 112 and aspartate 138 contribute to the active site. Residues 131–151 (WPIFNIADSAITIGACLLILF) traverse the membrane as a helical segment.

Belongs to the peptidase A8 family.

The protein resides in the cell inner membrane. The catalysed reaction is Release of signal peptides from bacterial membrane prolipoproteins. Hydrolyzes -Xaa-Yaa-Zaa-|-(S,diacylglyceryl)Cys-, in which Xaa is hydrophobic (preferably Leu), and Yaa (Ala or Ser) and Zaa (Gly or Ala) have small, neutral side chains.. Its pathway is protein modification; lipoprotein biosynthesis (signal peptide cleavage). Its function is as follows. This protein specifically catalyzes the removal of signal peptides from prolipoproteins. The protein is Lipoprotein signal peptidase of Chlorobium phaeobacteroides (strain DSM 266 / SMG 266 / 2430).